Consider the following 1069-residue polypeptide: Rab GTPase-activating protein 1 (1069 aa).

The disordered stretch occupies residues Met1–Glu79. A compositionally biased stretch (low complexity) spans Val7–Ser22. Ser42 carries the post-translational modification Phosphoserine. Positions Glu142–Ile298 constitute a PID domain. A Phosphoserine modification is found at Ser360. Residues Glu482–Gly527 are disordered. Polar residues predominate over residues Thr489–Ile506. The segment covering Pro510–Glu520 has biased composition (acidic residues). One can recognise a Rab-GAP TBC domain in the interval Gly566–Gly752. The stretch at Lys798 to Lys1047 forms a coiled coil. Position 996 is a phosphothreonine (Thr996).

Interacts with RAB6A and tubulin gamma.

It is found in the cytoplasm. The protein resides in the cytosol. The protein localises to the cytoskeleton. It localises to the microtubule organizing center. Its subcellular location is the centrosome. May act as a GTPase-activating protein of RAB6A. May play a role in microtubule nucleation by centrosome. May participate in a RAB6A-mediated pathway involved in the metaphase-anaphase transition. The chain is Rab GTPase-activating protein 1 (RABGAP1) from Homo sapiens (Human).